Reading from the N-terminus, the 216-residue chain is uncharacterized protein (216 aa).

In terms of domain architecture, 4Fe-4S ferredoxin-type spans P18–Q47. Residues C27, C30, C33, C37, C79, C82, and C86 each coordinate [4Fe-4S] cluster.

This is an uncharacterized protein from Geobacillus stearothermophilus (Bacillus stearothermophilus).